The following is an 82-amino-acid chain: Large ribosomal subunit protein uL23 (82 aa).

It belongs to the universal ribosomal protein uL23 family. Part of the 50S ribosomal subunit. Contacts protein L29.

Its function is as follows. Binds to 23S rRNA. One of the proteins that surrounds the polypeptide exit tunnel on the outside of the ribosome. The sequence is that of Large ribosomal subunit protein uL23 from Sulfolobus acidocaldarius (strain ATCC 33909 / DSM 639 / JCM 8929 / NBRC 15157 / NCIMB 11770).